The sequence spans 1271 residues: ATP-dependent helicase/nuclease subunit A (1271 aa).

Residues 3 to 476 (TKWTEEQELA…IMLYKNFRSR (474 aa)) enclose the UvrD-like helicase ATP-binding domain. 24-31 (AAAGSGKT) is an ATP binding site. The UvrD-like helicase C-terminal domain maps to 528-824 (IENLKVAGDI…RIMSIHKSKG (297 aa)).

The protein belongs to the helicase family. AddA subfamily. In terms of assembly, heterodimer of AddA and AddB/RexB. Requires Mg(2+) as cofactor.

The enzyme catalyses Couples ATP hydrolysis with the unwinding of duplex DNA by translocating in the 3'-5' direction.. It carries out the reaction ATP + H2O = ADP + phosphate + H(+). Functionally, the heterodimer acts as both an ATP-dependent DNA helicase and an ATP-dependent, dual-direction single-stranded exonuclease. Recognizes the chi site generating a DNA molecule suitable for the initiation of homologous recombination. The AddA nuclease domain is required for chi fragment generation; this subunit has the helicase and 3' -&gt; 5' nuclease activities. The sequence is that of ATP-dependent helicase/nuclease subunit A from Clostridium perfringens (strain ATCC 13124 / DSM 756 / JCM 1290 / NCIMB 6125 / NCTC 8237 / Type A).